The sequence spans 387 residues: Phosphoglycerate kinase (387 aa).

Residues Asp-21–Asn-23, Arg-36, His-59–Arg-62, Arg-113, and Arg-146 contribute to the substrate site. ATP contacts are provided by residues Lys-197, Glu-314, and Gly-340–Thr-343.

The protein belongs to the phosphoglycerate kinase family. As to quaternary structure, monomer.

It localises to the cytoplasm. The catalysed reaction is (2R)-3-phosphoglycerate + ATP = (2R)-3-phospho-glyceroyl phosphate + ADP. Its pathway is carbohydrate degradation; glycolysis; pyruvate from D-glyceraldehyde 3-phosphate: step 2/5. This Pseudomonas fluorescens (strain Pf0-1) protein is Phosphoglycerate kinase.